Here is a 186-residue protein sequence, read N- to C-terminus: Ribosome-recycling factor (186 aa).

Belongs to the RRF family.

It localises to the cytoplasm. Its function is as follows. Responsible for the release of ribosomes from messenger RNA at the termination of protein biosynthesis. May increase the efficiency of translation by recycling ribosomes from one round of translation to another. In Beijerinckia indica subsp. indica (strain ATCC 9039 / DSM 1715 / NCIMB 8712), this protein is Ribosome-recycling factor.